The chain runs to 263 residues: MASTQAQKALETFERFLASLDLESYQQKYRPIKTVEQDLPRELNPLPDLYEHYWKALEDNPSFLGFEEFFDHWWEKRLRPLDEFIRKYFWGCSYAFVRLGLEARLYRTAVSIWTQFHFCYRWNASCELPLEAAPELDAQGIDALIHTSGSSTGIQIKKETYRSEAKSENRFLRKQRGTALIEIPYTLQTPEELEEKAKRARVNGETYRLWAKVAHHLDRLENGFVIFRESYVKSIELFLQKNAPTLSGLIRWDRVAQEALTAP.

Post-translationally, only 15% of purified enzyme (upon expression in E.coli) can be sequenced, suggesting the remainder has a blocked N-terminus.

The catalysed reaction is Endonucleolytic cleavage of DNA to give specific double-stranded fragments with terminal 5'-phosphates.. In terms of biological role, a P subtype restriction enzyme that recognizes the double-stranded sequence 5'-TCGA-3' and cleaves after T-1. This Thermus aquaticus protein is Type II restriction enzyme TaqI (taqIR).